The sequence spans 552 residues: Gamma-aminobutyric acid receptor subunit alpha-4 (552 aa).

An N-terminal signal peptide occupies residues 1–35 (MVSVQKVPAIVLCSGVSLALLHVLCLATCLNESPG). The Extracellular portion of the chain corresponds to 36–259 (QNSKDEKLCP…FHLRRKMGYF (224 aa)). A glycan (N-linked (GlcNAc...) asparagine) is linked at Asn47. Residue Arg100 participates in 4-aminobutanoate binding. Residues Asn144 and Asn157 are each glycosylated (N-linked (GlcNAc...) asparagine). Thr163 contributes to the 4-aminobutanoate binding site. Cys172 and Cys186 are joined by a disulfide. The helical transmembrane segment at 260-280 (MIQTYIPCIMTVILSQVSFWI) threads the bilayer. Residues 281-284 (NKES) are Cytoplasmic-facing. The helical transmembrane segment at 285–305 (VPARTVFGITTVLTMTTLSIS) threads the bilayer. The Extracellular portion of the chain corresponds to 306–318 (ARHSLPKVSYATA). The chain crosses the membrane as a helical span at residues 319–341 (MDWFIAVCFAFVFSALIEFAAVN). At 342–515 (YFTNIQMQKA…PPPSGSGTSK (174 aa)) the chain is on the cytoplasmic side. 3 disordered regions span residues 353-436 (KKIS…NPFS), 448-470 (ARGL…PLRS), and 486-513 (TTVN…GSGT). A compositionally biased stretch (polar residues) spans 403 to 423 (RTEVGNHSSKTTAAQESSETT). Low complexity-rich tracts occupy residues 448–458 (ARGLSSAASPS) and 486–499 (TTVN…NVSA). The segment covering 500-509 (TPPPSAPPPS) has biased composition (pro residues). A helical membrane pass occupies residues 516–538 (IDKYARILFPVTFGAFNMVYWVV). The Extracellular segment spans residues 539–552 (YLSKDTMEKSESLM).

Belongs to the ligand-gated ion channel (TC 1.A.9) family. Gamma-aminobutyric acid receptor (TC 1.A.9.5) subfamily. GABRA4 sub-subfamily. Heteropentamer, formed by a combination of alpha (GABRA1-6), beta (GABRB1-3), gamma (GABRG1-3), delta (GABRD), epsilon (GABRE), rho (GABRR1-3), pi (GABRP) and theta (GABRQ) chains, each subunit exhibiting distinct physiological and pharmacological properties. In terms of tissue distribution, expressed in the brain.

Its subcellular location is the cell membrane. The protein resides in the postsynaptic cell membrane. Its activity is regulated as follows. Potentiated by histamine. Functionally, alpha subunit of the heteropentameric ligand-gated chloride channel gated by gamma-aminobutyric acid (GABA), a major inhibitory neurotransmitter in the brain. GABA-gated chloride channels, also named GABA(A) receptors (GABAAR), consist of five subunits arranged around a central pore and contain GABA active binding site(s) located at the alpha and beta subunit interface(s). Alpha-4/GABRA4 subunit often assembles with delta or gamma-2 subunits, in combination with beta subunits. When activated by GABA, GABAARs selectively allow the flow of chloride anions across the cell membrane down their electrochemical gradient. GABAARs containing alpha-4 are predominantly extrasynaptic, contributing to tonic inhibition in dentate granule cells and thalamic relay neurons. Extrasynaptic alpha-4-containing GABAARs control levels of excitability and network activity. GABAAR containing alpha-4-beta-3-delta subunits can simultaneously bind GABA and histamine where histamine binds at the interface of two neighboring beta subunits, which may be involved in the regulation of sleep and wakefulness. This is Gamma-aminobutyric acid receptor subunit alpha-4 from Rattus norvegicus (Rat).